The chain runs to 366 residues: Phenylalanine--tRNA ligase alpha subunit (366 aa).

Glu264 serves as a coordination point for Mg(2+).

This sequence belongs to the class-II aminoacyl-tRNA synthetase family. Phe-tRNA synthetase alpha subunit type 1 subfamily. Tetramer of two alpha and two beta subunits. Mg(2+) is required as a cofactor.

The protein localises to the cytoplasm. It carries out the reaction tRNA(Phe) + L-phenylalanine + ATP = L-phenylalanyl-tRNA(Phe) + AMP + diphosphate + H(+). In Zymomonas mobilis subsp. mobilis (strain ATCC 31821 / ZM4 / CP4), this protein is Phenylalanine--tRNA ligase alpha subunit.